The following is a 151-amino-acid chain: Globin (151 aa).

The Globin domain occupies 2-151 (SLSDADKKAL…AAFNETLKKA (150 aa)). H100 provides a ligand contact to heme b.

The protein belongs to the globin family.

In Biomphalaria glabrata (Bloodfluke planorb), this protein is Globin.